We begin with the raw amino-acid sequence, 339 residues long: MTIQKNWQELIRPNKLQVTPGSDATRFATLVAEPLERGFGQTLGNALRRVLLSSLQGAAVQSVHIDGVLHEFSSIAGVREDVTDIVLNIKDISLKMQGEGPKRMVVKKQGPGAVTAGDIQTVGDIVVLNPDLQLCTLDDGAEIRMEFTVNTGKGYVAAERNRPEDAPIGLIPVDSLYSPVRKVSYKVENTREGQILDYDKLTMTVETNGAISPEDAVAFAARILQDQLNVFVNFEEPRKEVTQEIIPDLAFNPAFLKKVDELELSVRSANCLKNDNIVYIGDLVQKSEAEMLRTPNFGRKSLNEIKEVLAQMGLHLGMEVPGWPPENIDELAKRFEDHY.

The alpha N-terminal domain (alpha-NTD) stretch occupies residues 1-235; the sequence is MTIQKNWQEL…DQLNVFVNFE (235 aa). Residues 251–339 are alpha C-terminal domain (alpha-CTD); it reads FNPAFLKKVD…ELAKRFEDHY (89 aa).

Belongs to the RNA polymerase alpha chain family. In terms of assembly, homodimer. The RNAP catalytic core consists of 2 alpha, 1 beta, 1 beta' and 1 omega subunit. When a sigma factor is associated with the core the holoenzyme is formed, which can initiate transcription.

It catalyses the reaction RNA(n) + a ribonucleoside 5'-triphosphate = RNA(n+1) + diphosphate. Its function is as follows. DNA-dependent RNA polymerase catalyzes the transcription of DNA into RNA using the four ribonucleoside triphosphates as substrates. This chain is DNA-directed RNA polymerase subunit alpha, found in Rhodopseudomonas palustris (strain ATCC BAA-98 / CGA009).